The primary structure comprises 154 residues: SKP1-like protein 13 (154 aa).

The segment at 96 to 154 is interaction with the F-box domain of F-box proteins; that stretch reads MLAANYLNIKDLLDLGCQTVADMITGKKPDEIRALLGIENDFTPEEEEEIRKENQWAFE.

It belongs to the SKP1 family. In terms of assembly, part of a SCF (SKP1-cullin-F-box) protein ligase complex. Interacts with ADO3/FKF1, EBF1, PP2A13, SKIP15, SKIP16, CPR1/CPR30, At1g55000, At3g61590, At1g67340, At1g78100, At3g04660, At4g38940, At4g39550 and At5g49610. As to expression, mostly expressed in inflorescences, and, to a lower extent, in seedlings and siliques. Also detected in cotyledons, leaves, pollen and seeds.

The protein localises to the nucleus. The protein operates within protein modification; protein ubiquitination. Involved in ubiquitination and subsequent proteasomal degradation of target proteins. Together with CUL1, RBX1 and a F-box protein, it forms a SCF E3 ubiquitin ligase complex. The functional specificity of this complex depends on the type of F-box protein. In the SCF complex, it serves as an adapter that links the F-box protein to CUL1. This chain is SKP1-like protein 13 (ASK13), found in Arabidopsis thaliana (Mouse-ear cress).